We begin with the raw amino-acid sequence, 285 residues long: Golgi phosphoprotein 3-like (285 aa).

The interval 1–42 (MTTLTHRARRTEISKNSEKKMESEEDSNWEKSPDNEDSGDSK) is disordered. Residues 10-42 (RTEISKNSEKKMESEEDSNWEKSPDNEDSGDSK) show a composition bias toward basic and acidic residues. The a 1,2-diacyl-sn-glycero-3-phospho-(1D-myo-inositol 4-phosphate) site is built by Trp-67 and Arg-76. Ser-112 bears the Phosphoserine mark. Positions 157 and 160 each coordinate a 1,2-diacyl-sn-glycero-3-phospho-(1D-myo-inositol 4-phosphate). The beta-hairpin required for oligomerization stretch occupies residues 176–187 (EKQNFLLFDMTT).

Belongs to the GOLPH3/VPS74 family. Homooligomer. Does not interact MYO18; differs from GOLPH3 by its inability to interact with MYO18. May interact with ARF1.

It is found in the golgi apparatus. Its subcellular location is the golgi stack membrane. The protein resides in the trans-Golgi network membrane. Phosphatidylinositol-4-phosphate-binding protein that may antagonize the action of GOLPH3 which is required for the process of vesicle budding at the Golgi and anterograde transport to the plasma membrane. This is Golgi phosphoprotein 3-like (GOLPH3L) from Homo sapiens (Human).